The primary structure comprises 427 residues: 3-phosphoshikimate 1-carboxyvinyltransferase (427 aa).

3-phosphoshikimate is bound by residues K20, S21, and R25. K20 contributes to the phosphoenolpyruvate binding site. Phosphoenolpyruvate contacts are provided by G90 and R118. 3-phosphoshikimate contacts are provided by S163, S164, Q165, S191, D309, and K336. Q165 contributes to the phosphoenolpyruvate binding site. The Proton acceptor role is filled by D309. Residues R340 and R381 each contribute to the phosphoenolpyruvate site.

It belongs to the EPSP synthase family. As to quaternary structure, monomer.

It localises to the cytoplasm. The enzyme catalyses 3-phosphoshikimate + phosphoenolpyruvate = 5-O-(1-carboxyvinyl)-3-phosphoshikimate + phosphate. It participates in metabolic intermediate biosynthesis; chorismate biosynthesis. Its function is as follows. Catalyzes the transfer of the enolpyruvyl moiety of phosphoenolpyruvate (PEP) to the 5-hydroxyl of shikimate-3-phosphate (S3P) to produce enolpyruvyl shikimate-3-phosphate and inorganic phosphate. This is 3-phosphoshikimate 1-carboxyvinyltransferase from Methanococcoides burtonii (strain DSM 6242 / NBRC 107633 / OCM 468 / ACE-M).